A 163-amino-acid chain; its full sequence is Campylobacter invasion antigen D (163 aa).

The MKD motif lies at 135-145 (KKDDLENRLNL).

Interacts with the host cell protein IQGAP1, thus displacing RACGAP1 from the IQGAP1 complex.

It is found in the secreted. Its subcellular location is the host cytoplasm. It localises to the host cytosol. Effector protein required for the development of acute disease and colon inflammatory lesions. Required for maximal host cell invasion and maximal secretion of the inflammatory chemokine interleukin-8 (IL-8) from host cells. Acts by activating the host MAP kinase signaling pathways ERK-1/2 and p38 to promote both cellular invasion and the release of IL-8. CiaD mediated activation of ERK-1/2 leads to the phosphorylation of host cortactin (CTTN) on serine residues and association of cortactin with N-WASP, promoting actin cytoskeleton rearrangement, membrane ruffling and host cell invasion. In addition, maximal host cell invasion requires interaction with the host cell protein IQGAP1, a Ras GTPase-activating-like protein. Binding to IQGAP1 facilitates the activation of the Rho GTPases RAC1 and CDC42, further promoting actin reorganization and bacterial uptake. CiaD promotes RAC1 activation by excluding RACGAP1 from the IQGAP1 complex, preventing the deactivation of RAC1. CiaD probably activates ERK signaling upstream or independently of IQGAP1. This Campylobacter jejuni subsp. jejuni serotype O:2 (strain ATCC 700819 / NCTC 11168) protein is Campylobacter invasion antigen D.